Reading from the N-terminus, the 380-residue chain is Cytochrome b (380 aa).

4 consecutive transmembrane segments (helical) span residues 34–54 (FGSLLGICLMTQILTGLLLAT), 78–99 (WLIRNLHANGASFFFICIYLHI), 114–134 (WNTGVILLLTLMATAFVGYVL), and 179–199 (FFALHFLLPFMIAGLTTIHLT). His84 and His98 together coordinate heme b. Heme b contacts are provided by His183 and His197. His202 lines the a ubiquinone pocket. 4 helical membrane-spanning segments follow: residues 227 to 247 (LKDILGFTLMLLPLTILALFS), 289 to 309 (LGGVLALAASVLILFLTPFLH), 321 to 341 (ISQLLFWILVTNLLILTWVGS), and 348 to 368 (FIIIGQLASITYFTILLILFP).

This sequence belongs to the cytochrome b family. In terms of assembly, the cytochrome bc1 complex contains 11 subunits: 3 respiratory subunits (MT-CYB, CYC1 and UQCRFS1), 2 core proteins (UQCRC1 and UQCRC2) and 6 low-molecular weight proteins (UQCRH/QCR6, UQCRB/QCR7, UQCRQ/QCR8, UQCR10/QCR9, UQCR11/QCR10 and a cleavage product of UQCRFS1). This cytochrome bc1 complex then forms a dimer. It depends on heme b as a cofactor.

The protein localises to the mitochondrion inner membrane. Component of the ubiquinol-cytochrome c reductase complex (complex III or cytochrome b-c1 complex) that is part of the mitochondrial respiratory chain. The b-c1 complex mediates electron transfer from ubiquinol to cytochrome c. Contributes to the generation of a proton gradient across the mitochondrial membrane that is then used for ATP synthesis. The sequence is that of Cytochrome b (MT-CYB) from Pelecanoides magellani (Magellanic diving petrel).